The primary structure comprises 451 residues: Cobalamin reductase PduS (451 aa).

4Fe-4S ferredoxin-type domains follow at residues Thr255–Ser284 and Pro300–Asn330. Positions 264, 267, 270, 274, 309, 312, 315, and 320 each coordinate [4Fe-4S] cluster.

Belongs to the PduS cobalamin reductase family. As to quaternary structure, monomer, forms a complex with PduO. Interacts with PduT, probably via the N-terminus of PduS. The cofactor is [4Fe-4S] cluster. FMN is required as a cofactor.

Its subcellular location is the bacterial microcompartment. It functions in the pathway polyol metabolism; 1,2-propanediol degradation. In terms of biological role, a bifunctional cobalamin reductase that converts cob(III)alamin to cob(II)alamin and then to cob(I)alamin in the bacterial microcompartment (BMC) dedicated to 1,2-propanediol (1,2-PD) degradation. PduS and PduO allow regeneration of the adenosylcobalamin cofactor within the BMC. Cobalamin reduction probably occurs spontaneously in the presence of free reduced flavin nucleotides, this protein may be involved in electron transfer for this reduction. Its function is as follows. Expression of a cosmid containing the full 21-gene pdu operon in E.coli allows E.coli to grow on 1,2-propanediol (1,2-PD) with the appearance of BMCs in its cytoplasm. Functionally, the 1,2-PD-specific bacterial microcompartment (BMC) concentrates low levels of 1,2-PD catabolic enzymes, concentrates volatile reaction intermediates thus enhancing pathway flux and keeps the level of toxic, mutagenic propionaldehyde low. The sequence is that of Cobalamin reductase PduS from Citrobacter freundii.